Consider the following 357-residue polypeptide: Glycerol-3-phosphate dehydrogenase [NAD(P)+] (357 aa).

The NADPH site is built by serine 30, phenylalanine 31, arginine 51, and lysine 124. Residues lysine 124 and glycine 152 each contribute to the sn-glycerol 3-phosphate site. Alanine 156 is a binding site for NADPH. Residues lysine 207, aspartate 260, serine 270, arginine 271, and asparagine 272 each coordinate sn-glycerol 3-phosphate. Lysine 207 functions as the Proton acceptor in the catalytic mechanism. Arginine 271 is a binding site for NADPH. Position 297 (glutamate 297) interacts with NADPH.

It belongs to the NAD-dependent glycerol-3-phosphate dehydrogenase family.

It is found in the cytoplasm. The enzyme catalyses sn-glycerol 3-phosphate + NAD(+) = dihydroxyacetone phosphate + NADH + H(+). It catalyses the reaction sn-glycerol 3-phosphate + NADP(+) = dihydroxyacetone phosphate + NADPH + H(+). It participates in membrane lipid metabolism; glycerophospholipid metabolism. In terms of biological role, catalyzes the reduction of the glycolytic intermediate dihydroxyacetone phosphate (DHAP) to sn-glycerol 3-phosphate (G3P), the key precursor for phospholipid synthesis. This is Glycerol-3-phosphate dehydrogenase [NAD(P)+] from Acinetobacter baumannii (strain AB307-0294).